Here is a 311-residue protein sequence, read N- to C-terminus: Methionyl-tRNA formyltransferase (311 aa).

117–120 contacts (6S)-5,6,7,8-tetrahydrofolate; the sequence is SLLP.

This sequence belongs to the Fmt family.

It carries out the reaction L-methionyl-tRNA(fMet) + (6R)-10-formyltetrahydrofolate = N-formyl-L-methionyl-tRNA(fMet) + (6S)-5,6,7,8-tetrahydrofolate + H(+). Its function is as follows. Attaches a formyl group to the free amino group of methionyl-tRNA(fMet). The formyl group appears to play a dual role in the initiator identity of N-formylmethionyl-tRNA by promoting its recognition by IF2 and preventing the misappropriation of this tRNA by the elongation apparatus. The sequence is that of Methionyl-tRNA formyltransferase from Bordetella avium (strain 197N).